Reading from the N-terminus, the 274-residue chain is ATP synthase subunit a (274 aa).

A run of 5 helical transmembrane segments spans residues 44–64, 110–130, 142–164, 212–232, and 243–263; these read VDSM…FYMV, FIWV…FPFI, IVPS…LILF, LFGN…LLPW, and AIFH…LTIV.

The protein belongs to the ATPase A chain family. In terms of assembly, F-type ATPases have 2 components, CF(1) - the catalytic core - and CF(0) - the membrane proton channel. CF(1) has five subunits: alpha(3), beta(3), gamma(1), delta(1), epsilon(1). CF(0) has three main subunits: a(1), b(2) and c(9-12). The alpha and beta chains form an alternating ring which encloses part of the gamma chain. CF(1) is attached to CF(0) by a central stalk formed by the gamma and epsilon chains, while a peripheral stalk is formed by the delta and b chains.

It localises to the cell membrane. Its function is as follows. Key component of the proton channel; it plays a direct role in the translocation of protons across the membrane. This Buchnera aphidicola subsp. Acyrthosiphon pisum (strain APS) (Acyrthosiphon pisum symbiotic bacterium) protein is ATP synthase subunit a.